The chain runs to 175 residues: SsrA-binding protein (175 aa).

Disordered regions lie at residues 1–29 (MTRNPQPDRSKTAPKNAKRDPVASGERDA) and 152–175 (KRETDRRKTADRDAREAIARSRKS).

The protein belongs to the SmpB family.

The protein resides in the cytoplasm. Required for rescue of stalled ribosomes mediated by trans-translation. Binds to transfer-messenger RNA (tmRNA), required for stable association of tmRNA with ribosomes. tmRNA and SmpB together mimic tRNA shape, replacing the anticodon stem-loop with SmpB. tmRNA is encoded by the ssrA gene; the 2 termini fold to resemble tRNA(Ala) and it encodes a 'tag peptide', a short internal open reading frame. During trans-translation Ala-aminoacylated tmRNA acts like a tRNA, entering the A-site of stalled ribosomes, displacing the stalled mRNA. The ribosome then switches to translate the ORF on the tmRNA; the nascent peptide is terminated with the 'tag peptide' encoded by the tmRNA and targeted for degradation. The ribosome is freed to recommence translation, which seems to be the essential function of trans-translation. The polypeptide is SsrA-binding protein (Koribacter versatilis (strain Ellin345)).